Here is a 502-residue protein sequence, read N- to C-terminus: Hippocampus abundant transcript-like protein 1 (502 aa).

Residues 1–12 (MNAEPPEEKAAS) show a composition bias toward basic and acidic residues. Residues 1-27 (MNAEPPEEKAASEAEAGAMPEKRAGSR) are disordered. Residues 1-46 (MNAEPPEEKAASEAEAGAMPEKRAGSRAAGGNSLQGFGRPSVYHAA) lie on the Extracellular side of the membrane. The chain crosses the membrane as a helical span at residues 47–67 (IVIFLEFFAWGLLTTSMLTVL). Over 68 to 79 (HETFPQHTFLMN) the chain is Cytoplasmic. A helical membrane pass occupies residues 80–100 (GLIQGVKGLLSFLSAPLIGAL). The Extracellular segment spans residues 101-108 (SDVWGRKP). The chain crosses the membrane as a helical span at residues 109 to 129 (FLLGTVFFTCFPIPLMRISPW). Residues 130–131 (WY) are Cytoplasmic-facing. A helical membrane pass occupies residues 132–152 (FAMISISGVFSVTFSVIFAYV). Residues 153–165 (ADVTQEHERSTAY) are Extracellular-facing. Residues 166-186 (GWVSATFAASLVSSPAIGAYL) form a helical membrane-spanning segment. Residues 187–193 (SASYGDS) are Cytoplasmic-facing. Residues 194–214 (LVVLVATVVALLDICFILLAV) form a helical membrane-spanning segment. Residues 215–248 (PESLPEKMRPLSWGARISWKQADPFASLKKVGKD) lie on the Extracellular side of the membrane. Residues 249–269 (STILLICITVFLSYLPEAGQY) form a helical membrane-spanning segment. The Cytoplasmic segment spans residues 270 to 278 (SSFFLYLRQ). The helical transmembrane segment at 279–299 (VIGFGSIKIAAFIAMVGILSI) threads the bilayer. The Extracellular segment spans residues 300 to 316 (VAQTVFLTSLMRSLGNK). Residues 317–337 (NTVLLGLGFQMFQLAWYGFGS) traverse the membrane as a helical segment. Position 338 (Gln-338) is a topological domain, cytoplasmic. The chain crosses the membrane as a helical span at residues 339 to 359 (AWMMWAAGIVAAVSSITFPAV). Residues 360-384 (STLVSQNADSNQQGVAQGIITGIRG) lie on the Extracellular side of the membrane. Residues 385 to 405 (LCNGLGPALYGFIFYMFHVEL) traverse the membrane as a helical segment. At 406-425 (TELEPELISNNAALQGAVIP) the chain is on the cytoplasmic side. Residues 426–446 (GPPFLFGACIVFMSFLVAVFI) traverse the membrane as a helical segment. Over 447-502 (PEYSKGGIQKHSNSISGSLANTPERGSDEDIEPLLQDSSIWELSSLEEPGHQCTEL) the chain is Extracellular.

This sequence belongs to the major facilitator superfamily.

The protein localises to the membrane. The polypeptide is Hippocampus abundant transcript-like protein 1 (Bos taurus (Bovine)).